The primary structure comprises 457 residues: 6-phosphofructo-2-kinase/fructose-2,6-bisphosphatase (457 aa).

Residues 1 to 20 (MEIPPGLETTKRKVAHSDEH) are disordered. The 6-phosphofructo-2-kinase stretch occupies residues 1 to 244 (MEIPPGLETT…VYFLMNIHLL (244 aa)). The span at 9–20 (TTKRKVAHSDEH) shows a compositional bias: basic and acidic residues. 36-44 (GLPARGKTY) lines the ATP pocket. Beta-D-fructose 6-phosphate-binding residues include R69 and R98. The active site involves D124. 2 residues coordinate beta-D-fructose 6-phosphate: T126 and R132. Residue C154 is part of the active site. An ATP-binding site is contributed by 163 to 168 (NVTDVK). Beta-D-fructose 6-phosphate contacts are provided by K168, R190, and Y194. A fructose-2,6-bisphosphatase region spans residues 245-457 (PRSIYLTRHG…QLPLCDSPRD (213 aa)). Residue R252 participates in beta-D-fructose 2,6-bisphosphate binding. H253 (tele-phosphohistidine intermediate) is an active-site residue. Beta-D-fructose 2,6-bisphosphate contacts are provided by N259 and G265. E324 (proton donor/acceptor) is an active-site residue. The beta-D-fructose 2,6-bisphosphate site is built by Y335, R349, K353, Y364, Q390, and R394. 346–349 (ADDR) contacts ATP. ATP contacts are provided by residues 390–394 (QAVLR) and Y426.

The protein in the C-terminal section; belongs to the phosphoglycerate mutase family.

The enzyme catalyses beta-D-fructose 2,6-bisphosphate + H2O = beta-D-fructose 6-phosphate + phosphate. The catalysed reaction is beta-D-fructose 6-phosphate + ATP = beta-D-fructose 2,6-bisphosphate + ADP + H(+). Its function is as follows. Synthesis and degradation of fructose 2,6-bisphosphate. This Caenorhabditis elegans protein is 6-phosphofructo-2-kinase/fructose-2,6-bisphosphatase.